The chain runs to 323 residues: Galectin-4 (323 aa).

Galectin domains lie at 19 to 150 and 194 to 323; these read YYQP…INFI and YFGR…YVQI. 256–262 serves as a coordination point for a beta-D-galactoside; sequence WGSEEKK. Ser-258 is subject to Phosphoserine.

As to quaternary structure, monomer.

Functionally, galectin that binds lactose and a related range of sugars. May be involved in the assembly of adherens junctions. The protein is Galectin-4 (LGALS4) of Homo sapiens (Human).